The primary structure comprises 179 residues: Adenine phosphoribosyltransferase (179 aa).

This sequence belongs to the purine/pyrimidine phosphoribosyltransferase family. In terms of assembly, homodimer.

The protein localises to the cytoplasm. The enzyme catalyses AMP + diphosphate = 5-phospho-alpha-D-ribose 1-diphosphate + adenine. Its pathway is purine metabolism; AMP biosynthesis via salvage pathway; AMP from adenine: step 1/1. Catalyzes a salvage reaction resulting in the formation of AMP, that is energically less costly than de novo synthesis. This is Adenine phosphoribosyltransferase from Helicobacter acinonychis (strain Sheeba).